The sequence spans 138 residues: Acidic phospholipase A2 Cvv-E6f (138 aa).

The N-terminal stretch at 1 to 16 (MRTLWIVAVLLLGVEG) is a signal peptide. 7 cysteine pairs are disulfide-bonded: Cys42-Cys131, Cys44-Cys60, Cys59-Cys111, Cys65-Cys138, Cys66-Cys104, Cys73-Cys97, and Cys91-Cys102. 3 residues coordinate Ca(2+): Tyr43, Gly45, and Gly47. His63 is a catalytic residue. Asp64 contacts Ca(2+). Asp105 is an active-site residue.

The cofactor is Ca(2+). In terms of tissue distribution, expressed by the venom gland.

It is found in the secreted. It carries out the reaction a 1,2-diacyl-sn-glycero-3-phosphocholine + H2O = a 1-acyl-sn-glycero-3-phosphocholine + a fatty acid + H(+). Functionally, snake venom phospholipase A2 (PLA2) that shows very low inhibition of ADP-induced platelet aggregation in platelet-rich plasma of human, rabbit and guinea pig. In vivo, shows efficient edema-inducing activities in rat paws. PLA2 catalyzes the calcium-dependent hydrolysis of the 2-acyl groups in 3-sn-phosphoglycerides. The protein is Acidic phospholipase A2 Cvv-E6f of Crotalus viridis viridis (Prairie rattlesnake).